The chain runs to 209 residues: Small ribosomal subunit protein uS4 (209 aa).

The 63-residue stretch at 99 to 161 (CRLDNIAFRL…SSKLVVVEMG (63 aa)) folds into the S4 RNA-binding domain.

The protein belongs to the universal ribosomal protein uS4 family. As to quaternary structure, part of the 30S ribosomal subunit. Contacts protein S5. The interaction surface between S4 and S5 is involved in control of translational fidelity.

In terms of biological role, one of the primary rRNA binding proteins, it binds directly to 16S rRNA where it nucleates assembly of the body of the 30S subunit. With S5 and S12 plays an important role in translational accuracy. This chain is Small ribosomal subunit protein uS4, found in Acidobacterium capsulatum (strain ATCC 51196 / DSM 11244 / BCRC 80197 / JCM 7670 / NBRC 15755 / NCIMB 13165 / 161).